Reading from the N-terminus, the 261-residue chain is MQDSPLIIGSRQFQSRLLVGTGKYKDLNETDLAIQASGAEIVTVAIRRVNIGQHADQPNLLSVIPPEKYTILPNTAGCFDADSAIRTCMLARELLDGHNLVKLEVLGDQDTLYPNITETLKAARTLIDDGFEIMVYTSDDPIVAKELESMGCVAIMPLGSLIGSGLGILNPHTISIIKENAKVPVLVDAGVGTASDAAIAMELGCDGVLMNTAIAAAQHPVLMASAMKKAIEAGREAFLAGRMPRKRMANASSPETGYFFK.

The active-site Schiff-base intermediate with DXP is Lys-102. 1-deoxy-D-xylulose 5-phosphate is bound by residues Gly-163, 189-190 (AG), and 211-212 (NT).

It belongs to the ThiG family. As to quaternary structure, homotetramer. Forms heterodimers with either ThiH or ThiS.

Its subcellular location is the cytoplasm. It carries out the reaction [ThiS sulfur-carrier protein]-C-terminal-Gly-aminoethanethioate + 2-iminoacetate + 1-deoxy-D-xylulose 5-phosphate = [ThiS sulfur-carrier protein]-C-terminal Gly-Gly + 2-[(2R,5Z)-2-carboxy-4-methylthiazol-5(2H)-ylidene]ethyl phosphate + 2 H2O + H(+). Its pathway is cofactor biosynthesis; thiamine diphosphate biosynthesis. Catalyzes the rearrangement of 1-deoxy-D-xylulose 5-phosphate (DXP) to produce the thiazole phosphate moiety of thiamine. Sulfur is provided by the thiocarboxylate moiety of the carrier protein ThiS. In vitro, sulfur can be provided by H(2)S. The protein is Thiazole synthase of Acinetobacter baylyi (strain ATCC 33305 / BD413 / ADP1).